We begin with the raw amino-acid sequence, 199 residues long: MSLKSDSETNTSVSLEEEVRTLFVSGLPVDIKPRELYLLFRPFKGYEGSLIKLTSKQPVGFVTFDSRSGAEAAKNALNGIRFDPESPQTLRLEFAKANTKMAKSKLMATPNPSNLHPALGAHFIARDPYDLTGAALIPASPEAWAPYPLYTTELTPGLPHAAFTYPAAAAAAAALHAQMRWYPSPSESSQPGWKSRQFC.

Residues 20–97 (RTLFVSGLPV…QTLRLEFAKA (78 aa)) form the RRM domain.

Interacts with Bucky ball (BUC); to mediate Balbiani body formation and oocyte polarity during early oogenesis.

It localises to the cytoplasm. The protein localises to the nucleus. Its subcellular location is the stress granule. Functionally, RNA-binding protein involved in the regulation of smooth muscle cell differentiation and proliferation in the gastrointestinal system. RNA-binding protein localized in Balbiani body (electron-dense aggregates in the oocyte) and germ plasm during oogenesis, and may be required to maintain germ plasm mRNA translational repression. Translational regulator during topographic map formation in the visual system. Establishes oocyte polarity through interaction with Bucky ball (BUC). Acts as a pre-mRNA alternative splicing regulator. Mediates ACTN1 and FLNB alternative splicing. Likely binds to mRNA tandem CAC trinucleotide or CA dinucleotide motifs. This is RNA-binding protein, mRNA-processing factor 2a from Danio rerio (Zebrafish).